We begin with the raw amino-acid sequence, 1783 residues long: 6-methylsalicylic acid synthase (1783 aa).

Residues 1–31 (MITSTSSTEVLTPANGSDDSKGTTTPATSSG) are compositionally biased toward polar residues. A disordered region spans residues 1 to 40 (MITSTSSTEVLTPANGSDDSKGTTTPATSSGDPEMHDDLL). The Ketosynthase family 3 (KS3) domain maps to 45–474 (HDDVAIIGMA…GTVSHAIIEA (430 aa)). Active-site for beta-ketoacyl synthase activity residues include C217, H352, and H394. The interval 587-884 (WVFSGHGAQW…TPTMVRKQPA (298 aa)) is malonyl-CoA:ACP transacylase (MAT) domain. S673 functions as the For acyl/malonyl transferase activity in the catalytic mechanism. Residues 942 to 1215 (THKPAANDLL…AFAGVEGESL (274 aa)) form a product template (PT) domain region. Residues 948-1064 (NDLLGTRTAL…ATVGADATPS (117 aa)) form an N-terminal hotdog fold region. The 269-residue stretch at 948–1216 (NDLLGTRTAL…FAGVEGESLS (269 aa)) folds into the PKS/mFAS DH domain. The active-site Proton acceptor; for dehydratase activity is the H980. The interval 1078-1216 (PQKLSDSFSI…FAGVEGESLS (139 aa)) is C-terminal hotdog fold. The Proton donor; for dehydratase activity role is filled by D1130. Residues 1707–1781 (EYVLVVVKKC…HLVEYFCQVL (75 aa)) form the Carrier domain. Position 1741 is an O-(pantetheine 4'-phosphoryl)serine (S1741).

The enzyme catalyses 3 malonyl-CoA + acetyl-CoA + NADPH + 3 H(+) = 6-methylsalicylate + 3 CO2 + NADP(+) + 4 CoA + H2O. Its pathway is secondary metabolite biosynthesis; terpenoid biosynthesis. Non-reducing polyketide synthase; part of the gene cluster that mediates the biosynthesis of macrophorins, isoprenoid epoxycyclohexenones containing cyclized drimane moieties. The first step of the pathway is the synthesis of 6-methylsalicylic acid (6-MSA) by the polyketide synthase macA. 6-MSA is then converted to m-cresol by the decarboxylase macB. The cytochrome P450 monooxygenase macC then catalyzes the oxidation of m-cresol to toluquinol. Epoxidation of toluquinol is then performed by the short chain dehydrogenase macD, with the help of macE, and a further prenylation by macG leads to 7-deacetoxyyanuthone A. The next step is the hydroxylation of C-22 of 7-deacetoxyyanuthone A by the cytochrome P450 monooxygenase macH to yield 22-deacetylyanuthone A. O-Mevalon transferase macI then attaches mevalon to the hydroxyl group of 22-deacetylyanuthone A to produce yanuthone E. The terpene cyclase macJ catalyzes the cyclization of 22-deacetylyanuthone A to macrophorin A. MacJ is also able to catalyze cyclization of yanuthone E and 7-deacetoxyyanuthone A to their corresponding macrophorins. The macJ products can be further modified by macH and macJ, as well as by the FAD-dependent monooxygenase macF, to produce additional macrophorins, including 4'-oxomacrophorin A, 4'-oxomacrophorin D and 4'-oxomacrophorin E. This Penicillium terrestre protein is 6-methylsalicylic acid synthase.